Reading from the N-terminus, the 100-residue chain is uncharacterized protein (100 aa).

Transmembrane regions (helical) follow at residues 30–50 and 69–89; these read FHIP…PLAF and FLLI…LPFF.

It localises to the cytoplasm. The protein resides in the nucleus membrane. This is an uncharacterized protein from Schizosaccharomyces pombe (strain 972 / ATCC 24843) (Fission yeast).